The chain runs to 181 residues: MTEYKLVVVGAGGVGKSALTIQLIQNHFVDEYDPTIEDSYRKQVVIDGETCLLDILDTAGQEEYSAMRDQYMRTGEGFLLVFAVNSAKSFEDIGTYREQIKRVKDAEEVPMVLVGNKCDLPSWNVAKQYGIPYIETSAKTRMGVDDAFYTLVREIRKDKDNKGRKGRKTNKPNRRFKCKML.

10–17 (GAGGVGKS) lines the GTP pocket. An Effector region motif is present at residues 32-40 (YDPTIEDSY). GTP contacts are provided by residues 57-61 (DTAGQ) and 116-119 (NKCD). Cys-178 is subject to Cysteine methyl ester. Cys-178 is lipidated: S-geranylgeranyl cysteine. The propeptide at 179-181 (KML) is removed in mature form.

The protein belongs to the small GTPase superfamily. Ras family.

The protein localises to the cell membrane. The catalysed reaction is GTP + H2O = GDP + phosphate + H(+). Alternates between an inactive form bound to GDP and an active form bound to GTP. Activated by a guanine nucleotide-exchange factor (GEF) and inactivated by a GTPase-activating protein (GAP). In terms of biological role, ras proteins bind GDP/GTP and possess intrinsic GTPase activity. Plays a role in eye development by regulating cell growth, survival of postmitotic ommatidial cells and differentiation of photoreceptor cells. During larval development, mediates Ptth/tor signaling leading to the production of ecdysone, a hormone required for the initiation of metamorphosis. The chain is Ras-like protein 1 from Drosophila mojavensis (Fruit fly).